Here is a 256-residue protein sequence, read N- to C-terminus: Thiazole synthase (256 aa).

Catalysis depends on K95, which acts as the Schiff-base intermediate with DXP. Residues G156, 182–183 (AG), and 204–205 (NT) each bind 1-deoxy-D-xylulose 5-phosphate.

The protein belongs to the ThiG family. In terms of assembly, homotetramer. Forms heterodimers with either ThiH or ThiS.

It localises to the cytoplasm. The enzyme catalyses [ThiS sulfur-carrier protein]-C-terminal-Gly-aminoethanethioate + 2-iminoacetate + 1-deoxy-D-xylulose 5-phosphate = [ThiS sulfur-carrier protein]-C-terminal Gly-Gly + 2-[(2R,5Z)-2-carboxy-4-methylthiazol-5(2H)-ylidene]ethyl phosphate + 2 H2O + H(+). The protein operates within cofactor biosynthesis; thiamine diphosphate biosynthesis. Functionally, catalyzes the rearrangement of 1-deoxy-D-xylulose 5-phosphate (DXP) to produce the thiazole phosphate moiety of thiamine. Sulfur is provided by the thiocarboxylate moiety of the carrier protein ThiS. In vitro, sulfur can be provided by H(2)S. The protein is Thiazole synthase of Escherichia coli O7:K1 (strain IAI39 / ExPEC).